Consider the following 259-residue polypeptide: Uridylate kinase (259 aa).

10 to 13 (KLSG) serves as a coordination point for ATP. Gly-52 provides a ligand contact to UMP. The ATP site is built by Gly-53 and Arg-57. UMP-binding positions include Asp-72 and 134 to 141 (NGQPFLTT). The ATP site is built by Tyr-168 and Asp-171. The interval 236–259 (ISSSPEKSEEFGNEVLASPAESTA) is disordered.

It belongs to the UMP kinase family. In terms of assembly, homohexamer.

It is found in the cytoplasm. It catalyses the reaction UMP + ATP = UDP + ADP. It functions in the pathway pyrimidine metabolism; CTP biosynthesis via de novo pathway; UDP from UMP (UMPK route): step 1/1. Its activity is regulated as follows. Inhibited by UTP. Functionally, catalyzes the reversible phosphorylation of UMP to UDP. This is Uridylate kinase from Frankia casuarinae (strain DSM 45818 / CECT 9043 / HFP020203 / CcI3).